The following is a 32-amino-acid chain: Photosystem II reaction center protein Z (32 aa).

Residues 9-31 traverse the membrane as a helical segment; sequence FILIGSASWAALVLLVGSLNSFV.

The protein belongs to the PsbZ family. PSII is composed of 1 copy each of membrane proteins PsbA, PsbB, PsbC, PsbD, PsbE, PsbF, PsbH, PsbI, PsbJ, PsbK, PsbL, PsbM, PsbT, PsbY, PsbZ, Psb30/Ycf12, at least 3 peripheral proteins of the oxygen-evolving complex and a large number of cofactors. It forms dimeric complexes.

Its subcellular location is the plastid. The protein localises to the chloroplast thylakoid membrane. In terms of biological role, may control the interaction of photosystem II (PSII) cores with the light-harvesting antenna, regulates electron flow through the 2 photosystem reaction centers. PSII is a light-driven water plastoquinone oxidoreductase, using light energy to abstract electrons from H(2)O, generating a proton gradient subsequently used for ATP formation. This chain is Photosystem II reaction center protein Z, found in Euglena viridis (Cercaria viridis).